The sequence spans 306 residues: Methionyl-tRNA formyltransferase (306 aa).

A (6S)-5,6,7,8-tetrahydrofolate-binding site is contributed by 109 to 112 (SILP).

The protein belongs to the Fmt family.

The enzyme catalyses L-methionyl-tRNA(fMet) + (6R)-10-formyltetrahydrofolate = N-formyl-L-methionyl-tRNA(fMet) + (6S)-5,6,7,8-tetrahydrofolate + H(+). Functionally, attaches a formyl group to the free amino group of methionyl-tRNA(fMet). The formyl group appears to play a dual role in the initiator identity of N-formylmethionyl-tRNA by promoting its recognition by IF2 and preventing the misappropriation of this tRNA by the elongation apparatus. The chain is Methionyl-tRNA formyltransferase from Herpetosiphon aurantiacus (strain ATCC 23779 / DSM 785 / 114-95).